A 316-amino-acid polypeptide reads, in one-letter code: Acetyl-coenzyme A carboxylase carboxyl transferase subunit alpha (316 aa).

Positions Asn24–Glu291 constitute a CoA carboxyltransferase C-terminal domain.

Belongs to the AccA family. In terms of assembly, acetyl-CoA carboxylase is a heterohexamer composed of biotin carboxyl carrier protein (AccB), biotin carboxylase (AccC) and two subunits each of ACCase subunit alpha (AccA) and ACCase subunit beta (AccD).

The protein resides in the cytoplasm. The enzyme catalyses N(6)-carboxybiotinyl-L-lysyl-[protein] + acetyl-CoA = N(6)-biotinyl-L-lysyl-[protein] + malonyl-CoA. It functions in the pathway lipid metabolism; malonyl-CoA biosynthesis; malonyl-CoA from acetyl-CoA: step 1/1. Its function is as follows. Component of the acetyl coenzyme A carboxylase (ACC) complex. First, biotin carboxylase catalyzes the carboxylation of biotin on its carrier protein (BCCP) and then the CO(2) group is transferred by the carboxyltransferase to acetyl-CoA to form malonyl-CoA. In Ruthia magnifica subsp. Calyptogena magnifica, this protein is Acetyl-coenzyme A carboxylase carboxyl transferase subunit alpha.